A 470-amino-acid polypeptide reads, in one-letter code: Uronate isomerase (470 aa).

It belongs to the metallo-dependent hydrolases superfamily. Uronate isomerase family.

It catalyses the reaction D-glucuronate = D-fructuronate. The enzyme catalyses aldehydo-D-galacturonate = keto-D-tagaturonate. It functions in the pathway carbohydrate metabolism; pentose and glucuronate interconversion. In Escherichia fergusonii (strain ATCC 35469 / DSM 13698 / CCUG 18766 / IAM 14443 / JCM 21226 / LMG 7866 / NBRC 102419 / NCTC 12128 / CDC 0568-73), this protein is Uronate isomerase.